The chain runs to 315 residues: Methionyl-tRNA formyltransferase (315 aa).

113-116 provides a ligand contact to (6S)-5,6,7,8-tetrahydrofolate; it reads SLLP.

This sequence belongs to the Fmt family.

The enzyme catalyses L-methionyl-tRNA(fMet) + (6R)-10-formyltetrahydrofolate = N-formyl-L-methionyl-tRNA(fMet) + (6S)-5,6,7,8-tetrahydrofolate + H(+). Functionally, attaches a formyl group to the free amino group of methionyl-tRNA(fMet). The formyl group appears to play a dual role in the initiator identity of N-formylmethionyl-tRNA by promoting its recognition by IF2 and preventing the misappropriation of this tRNA by the elongation apparatus. The sequence is that of Methionyl-tRNA formyltransferase from Edwardsiella ictaluri (strain 93-146).